Reading from the N-terminus, the 543-residue chain is Glucose-6-phosphate isomerase (543 aa).

The active-site Proton donor is the glutamate 353. Catalysis depends on residues histidine 384 and lysine 504.

The protein belongs to the GPI family.

It localises to the cytoplasm. It catalyses the reaction alpha-D-glucose 6-phosphate = beta-D-fructose 6-phosphate. Its pathway is carbohydrate biosynthesis; gluconeogenesis. The protein operates within carbohydrate degradation; glycolysis; D-glyceraldehyde 3-phosphate and glycerone phosphate from D-glucose: step 2/4. Catalyzes the reversible isomerization of glucose-6-phosphate to fructose-6-phosphate. In Roseiflexus sp. (strain RS-1), this protein is Glucose-6-phosphate isomerase.